The sequence spans 845 residues: Dynein axonemal assembly factor 5 (845 aa).

HEAT repeat units lie at residues 47 to 84 (DVFDKLYLHLLKCYEDRFESVRSKAIQVVSAFLSSLPP), 138 to 175 (ECYPLVVKILIKSIKDDYPVVQREGCSAVVTLSRLADT), 180 to 217 (PFTESILLPLYTMLNHKHAQARISAIQAIARLSLHMDA), 260 to 297 (SFFERILPLVLCCLKDESPEVLNHIYPQWLKCGIQYFN), 332 to 369 (QRSLRLLQLITRETSDWKDNVRLHALKLLYQFVLHAEA), 523 to 561 (NFGQTLIEKMVKLLNTSVPKIHERWFHLALQDVINLDAA), 674 to 715 (SESV…MSVE), and 766 to 803 (AIVKRAMDLLLLYHESPEKDMRAAVAVTLKVLAKSHPE).

This sequence belongs to the DNAAF5 family. Expressed in testis.

The protein resides in the cytoplasm. Its subcellular location is the dynein axonemal particle. Its function is as follows. Cytoplasmic protein involved in the delivery of the dynein machinery to the motile cilium. It is required for the assembly of the axonemal dynein inner and outer arms, two structures attached to the peripheral outer doublet A microtubule of the axoneme, that play a crucial role in cilium motility. The sequence is that of Dynein axonemal assembly factor 5 from Drosophila melanogaster (Fruit fly).